The following is a 159-amino-acid chain: 2-C-methyl-D-erythritol 2,4-cyclodiphosphate synthase (159 aa).

Residues aspartate 10 and histidine 12 each coordinate a divalent metal cation. 4-CDP-2-C-methyl-D-erythritol 2-phosphate is bound by residues 10–12 (DVH) and 36–37 (HS). Histidine 44 contacts a divalent metal cation. 4-CDP-2-C-methyl-D-erythritol 2-phosphate contacts are provided by residues 58-60 (DIG) and arginine 144.

Belongs to the IspF family. In terms of assembly, homotrimer. The cofactor is a divalent metal cation.

It carries out the reaction 4-CDP-2-C-methyl-D-erythritol 2-phosphate = 2-C-methyl-D-erythritol 2,4-cyclic diphosphate + CMP. It functions in the pathway isoprenoid biosynthesis; isopentenyl diphosphate biosynthesis via DXP pathway; isopentenyl diphosphate from 1-deoxy-D-xylulose 5-phosphate: step 4/6. Its function is as follows. Involved in the biosynthesis of isopentenyl diphosphate (IPP) and dimethylallyl diphosphate (DMAPP), two major building blocks of isoprenoid compounds. Catalyzes the conversion of 4-diphosphocytidyl-2-C-methyl-D-erythritol 2-phosphate (CDP-ME2P) to 2-C-methyl-D-erythritol 2,4-cyclodiphosphate (ME-CPP) with a corresponding release of cytidine 5-monophosphate (CMP). In Paraburkholderia phymatum (strain DSM 17167 / CIP 108236 / LMG 21445 / STM815) (Burkholderia phymatum), this protein is 2-C-methyl-D-erythritol 2,4-cyclodiphosphate synthase.